The primary structure comprises 542 residues: Berberine bridge enzyme-like 25 (542 aa).

The signal sequence occupies residues 1–30 (MGNSKPLPTISCISVFALYFSFYTITLTSS). Cysteine 40 and cysteine 104 are disulfide-bonded. Asparagine 61 carries an N-linked (GlcNAc...) asparagine glycan. One can recognise an FAD-binding PCMH-type domain in the interval 82-258 (TMPKPGFIFK…LSWKIKLVPV (177 aa)). Histidine 119 carries the post-translational modification Pros-8alpha-FAD histidine. N-linked (GlcNAc...) asparagine glycans are attached at residues asparagine 308 and asparagine 436.

It belongs to the oxygen-dependent FAD-linked oxidoreductase family. FAD serves as cofactor.

Its subcellular location is the secreted. It localises to the cell wall. The protein is Berberine bridge enzyme-like 25 of Arabidopsis thaliana (Mouse-ear cress).